The following is a 317-amino-acid chain: Phosphatidylglycerol--prolipoprotein diacylglyceryl transferase 2 (317 aa).

The next 4 membrane-spanning stretches (helical) occupy residues 19–39 (IPLRAYAFCIILGVFAAVWLG), 51–71 (GVIADVTLWAVPFGLVGGRLY), 93–113 (VWEGGLGIWGAIALGAVGAWI), and 120–140 (IPLPAFADAVAPGIVLAQAIG). Arg141 contributes to the a 1,2-diacyl-sn-glycero-3-phospho-(1'-sn-glycerol) binding site. A run of 3 helical transmembrane segments spans residues 180–200 (PTFLYESLWNIGVAALILWAA), 211–230 (FALYVAAYTVGRFGTEYLRI), and 241–261 (LNNWTSVLVFLGAVACLVVSA). The tract at residues 275–317 (GAGADGRTDDPRPADASVGLASGPPGNSTPRRATESWNVRNRS) is disordered. The span at 299 to 317 (PGNSTPRRATESWNVRNRS) shows a compositional bias: polar residues.

This sequence belongs to the Lgt family.

Its subcellular location is the cell membrane. It carries out the reaction L-cysteinyl-[prolipoprotein] + a 1,2-diacyl-sn-glycero-3-phospho-(1'-sn-glycerol) = an S-1,2-diacyl-sn-glyceryl-L-cysteinyl-[prolipoprotein] + sn-glycerol 1-phosphate + H(+). It functions in the pathway protein modification; lipoprotein biosynthesis (diacylglyceryl transfer). In terms of biological role, catalyzes the transfer of the diacylglyceryl group from phosphatidylglycerol to the sulfhydryl group of the N-terminal cysteine of a prolipoprotein, the first step in the formation of mature lipoproteins. In Streptomyces coelicolor (strain ATCC BAA-471 / A3(2) / M145), this protein is Phosphatidylglycerol--prolipoprotein diacylglyceryl transferase 2.